A 287-amino-acid polypeptide reads, in one-letter code: ATP synthase gamma chain (287 aa).

Belongs to the ATPase gamma chain family. As to quaternary structure, F-type ATPases have 2 components, CF(1) - the catalytic core - and CF(0) - the membrane proton channel. CF(1) has five subunits: alpha(3), beta(3), gamma(1), delta(1), epsilon(1). CF(0) has three main subunits: a, b and c.

It localises to the cell inner membrane. Its function is as follows. Produces ATP from ADP in the presence of a proton gradient across the membrane. The gamma chain is believed to be important in regulating ATPase activity and the flow of protons through the CF(0) complex. This chain is ATP synthase gamma chain, found in Photorhabdus laumondii subsp. laumondii (strain DSM 15139 / CIP 105565 / TT01) (Photorhabdus luminescens subsp. laumondii).